The sequence spans 397 residues: Succinate--CoA ligase [ADP-forming] subunit beta (397 aa).

One can recognise an ATP-grasp domain in the interval 9–254 (KALLKGYGAP…ETEEDAKEIE (246 aa)). ATP is bound by residues Lys46, 53–55 (GRG), Glu109, Ala112, and Glu117. Asn209 and Asp223 together coordinate Mg(2+). Residues Asn274 and 331-333 (GIM) each bind substrate.

This sequence belongs to the succinate/malate CoA ligase beta subunit family. In terms of assembly, heterotetramer of two alpha and two beta subunits. Requires Mg(2+) as cofactor.

It carries out the reaction succinate + ATP + CoA = succinyl-CoA + ADP + phosphate. It catalyses the reaction GTP + succinate + CoA = succinyl-CoA + GDP + phosphate. The protein operates within carbohydrate metabolism; tricarboxylic acid cycle; succinate from succinyl-CoA (ligase route): step 1/1. Succinyl-CoA synthetase functions in the citric acid cycle (TCA), coupling the hydrolysis of succinyl-CoA to the synthesis of either ATP or GTP and thus represents the only step of substrate-level phosphorylation in the TCA. The beta subunit provides nucleotide specificity of the enzyme and binds the substrate succinate, while the binding sites for coenzyme A and phosphate are found in the alpha subunit. The polypeptide is Succinate--CoA ligase [ADP-forming] subunit beta (Rhizobium etli (strain ATCC 51251 / DSM 11541 / JCM 21823 / NBRC 15573 / CFN 42)).